Consider the following 217-residue polypeptide: UPF0323 lipoprotein HPSH_01205 (217 aa).

The N-terminal stretch at 1 to 27 (MKKPYRKISDYAIVGGLSALVMVSIVG) is a signal peptide. A lipid anchor (N-palmitoyl cysteine) is attached at Cys28. Residue Cys28 is the site of S-diacylglycerol cysteine attachment. The span at 160-171 (QRTYKSPQAYQR) shows a compositional bias: polar residues. A disordered region spans residues 160 to 217 (QRTYKSPQAYQRSQNSFSKSAPSASSMGGASKGQSGFFGSSRPTSSPAVSSGTRGFNS). Residues 172–210 (SQNSFSKSAPSASSMGGASKGQSGFFGSSRPTSSPAVSS) are compositionally biased toward low complexity.

Belongs to the UPF0323 family.

It is found in the cell membrane. This chain is UPF0323 lipoprotein HPSH_01205, found in Helicobacter pylori (strain Shi470).